The primary structure comprises 508 residues: MVAEAGSMPAASSVKKPFGLRSKMGKWCRHCFPWCRGSGKSNVGTSGDHDDSAMKTLRSKMGKWCRHCFPWCRGSGKSNVGTSGDHDDSAMKTLRSKMGKWCCHCFPCCRGSGKSKVGPWGDYDDSAFMEPRYHVRREDLDKLHRAAWWGKVPRKDLIVMLKDTDMNKKDKQKRTALHLASANGNSEVVKLLLDRRCQLNILDNKKRTALTKAVQCQEDECALMLLEHGTDPNIPDEYGNTALHYAIYNEDKLMAKALLLYGADIESKNKHGLTPLLLGVHEQKQQVVKFLIKKKANLNALDRYGRTVLILAVCCGSASIVSLLLEQNIDVSSQDLSGQTAREYAVSSRHNVICQLLSDYKEKQILKVSSENSNPEQDLKLTSEEESQRLKGSENSQPEEMSQEPEINKGGDRKVEEEMKKHGSTHMGFPENLPNGATADNGDDGLIPPRKSRTPESQQFPDTENEQYHSDEQNDTQKQLSEEQNTGILQDEILIHEEKQIEVAENEF.

ANK repeat units follow at residues 172 to 201 (QKRTALHLASANGNSEVVKLLLDRRCQLNI), 205 to 234 (KKRTALTKAVQCQEDECALMLLEHGTDPNI), 238 to 267 (YGNTALHYAIYNEDKLMAKALLLYGADIES), 271 to 300 (HGLTPLLLGVHEQKQQVVKFLIKKKANLNA), and 304 to 333 (YGRTVLILAVCCGSASIVSLLLEQNIDVSS). A disordered region spans residues 369 to 487 (SSENSNPEQD…KQLSEEQNTG (119 aa)). Composition is skewed to basic and acidic residues over residues 377–392 (QDLKLTSEEESQRLKG) and 406–421 (EINKGGDRKVEEEMKK). A compositionally biased stretch (polar residues) spans 476–487 (TQKQLSEEQNTG).

The protein belongs to the POTE family.

This is Putative POTE ankyrin domain family member M (POTEM) from Homo sapiens (Human).